Reading from the N-terminus, the 492-residue chain is Bifunctional purine biosynthesis protein PurH (492 aa).

The MGS-like domain occupies 1–144 (MKKAILSVSN…KNYKHVTTIV (144 aa)).

This sequence belongs to the PurH family.

It carries out the reaction (6R)-10-formyltetrahydrofolate + 5-amino-1-(5-phospho-beta-D-ribosyl)imidazole-4-carboxamide = 5-formamido-1-(5-phospho-D-ribosyl)imidazole-4-carboxamide + (6S)-5,6,7,8-tetrahydrofolate. The enzyme catalyses IMP + H2O = 5-formamido-1-(5-phospho-D-ribosyl)imidazole-4-carboxamide. The protein operates within purine metabolism; IMP biosynthesis via de novo pathway; 5-formamido-1-(5-phospho-D-ribosyl)imidazole-4-carboxamide from 5-amino-1-(5-phospho-D-ribosyl)imidazole-4-carboxamide (10-formyl THF route): step 1/1. It participates in purine metabolism; IMP biosynthesis via de novo pathway; IMP from 5-formamido-1-(5-phospho-D-ribosyl)imidazole-4-carboxamide: step 1/1. This chain is Bifunctional purine biosynthesis protein PurH, found in Staphylococcus aureus (strain MRSA252).